Consider the following 559-residue polypeptide: Branched-chain-amino-acid aminotransferase-like protein 2 (559 aa).

The protein belongs to the class-IV pyridoxal-phosphate-dependent aminotransferase family.

The protein is Branched-chain-amino-acid aminotransferase-like protein 2 of Arabidopsis thaliana (Mouse-ear cress).